The primary structure comprises 293 residues: Sphingolipid C4-hydroxylase sur2 (293 aa).

The next 3 membrane-spanning stretches (helical) occupy residues L18–I38, A68–G88, and F127–F147. In terms of domain architecture, Fatty acid hydroxylase spans F136–T270.

This sequence belongs to the sterol desaturase family.

The protein localises to the endoplasmic reticulum membrane. The protein operates within membrane lipid metabolism; sphingolipid biosynthesis. Its function is as follows. Required for hydroxylation of C-4 in the sphingoid moiety of ceramide. Involved in the response to syringomycin. The polypeptide is Sphingolipid C4-hydroxylase sur2 (sur2) (Schizosaccharomyces pombe (strain 972 / ATCC 24843) (Fission yeast)).